We begin with the raw amino-acid sequence, 302 residues long: N-acetyl-D-glucosamine kinase (302 aa).

Residues 4 to 11 (GFDVGGTK) and 133 to 140 (GFGGGFIY) each bind ATP. Zn(2+)-binding residues include His157, Cys177, Cys179, and Cys184.

It belongs to the ROK (NagC/XylR) family. NagK subfamily.

It carries out the reaction N-acetyl-D-glucosamine + ATP = N-acetyl-D-glucosamine 6-phosphate + ADP + H(+). It participates in cell wall biogenesis; peptidoglycan recycling. Catalyzes the phosphorylation of N-acetyl-D-glucosamine (GlcNAc) derived from cell-wall degradation, yielding GlcNAc-6-P. In Vibrio parahaemolyticus serotype O3:K6 (strain RIMD 2210633), this protein is N-acetyl-D-glucosamine kinase.